A 342-amino-acid polypeptide reads, in one-letter code: Serine/threonine-protein kinase-transforming protein mos (342 aa).

Residues 63–338 (VCLMHRLGSG…LLQRDLKAFR (276 aa)) enclose the Protein kinase domain. ATP contacts are provided by residues 69-77 (LGSGGFGSV) and lysine 90. Aspartate 198 (proton acceptor) is an active-site residue.

This sequence belongs to the protein kinase superfamily. Ser/Thr protein kinase family.

The catalysed reaction is L-seryl-[protein] + ATP = O-phospho-L-seryl-[protein] + ADP + H(+). The enzyme catalyses L-threonyl-[protein] + ATP = O-phospho-L-threonyl-[protein] + ADP + H(+). This Myeloproliferative sarcoma virus (isolate ts159) protein is Serine/threonine-protein kinase-transforming protein mos (V-MOS).